Here is a 1402-residue protein sequence, read N- to C-terminus: Transcription elongation factor spt-6 (1402 aa).

Residues 1–199 (MSNSMRDLID…PKDRGLNIDT (199 aa)) form a disordered region. Acidic residues-rich tracts occupy residues 10–28 (DGEAELDDEEDDESFDEEA), 40–52 (DSSEEEEDDEDEE), 62–75 (IVDEDEEDEAEDSD), and 90–102 (EEEEQLDEEDLDL). The span at 123 to 135 (HRDDHRPTERRGL) shows a compositional bias: basic and acidic residues. The segment covering 161-176 (DEFDDFIEDDYPEDDE) has biased composition (acidic residues). Over residues 177–199 (ERRHREEDEEVARPKDRGLNIDT) the composition is skewed to basic and acidic residues. The 68-residue stretch at 1094 to 1161 (GMIVAANVRV…KEFVSKLSMR (68 aa)) folds into the S1 motif domain. An SH2 domain is found at 1209–1306 (PLFKPFNSTQ…KKVDELMQCD (98 aa)).

It belongs to the SPT6 family.

The protein localises to the nucleus. The protein resides in the chromosome. In terms of biological role, histone H3-H4 chaperone that plays a role in maintenance of chromatin structure during RNA polymerase II transcription elongation thereby repressing transcription initiation from cryptic promoters. Mediates the reassembly of nucleosomes onto the promoters of at least a selected set of genes during repression; the nucleosome reassembly is essential for transcriptional repression. Essential for viability. This is Transcription elongation factor spt-6 (spt-6) from Neurospora crassa (strain ATCC 24698 / 74-OR23-1A / CBS 708.71 / DSM 1257 / FGSC 987).